The sequence spans 127 residues: Small ribosomal subunit protein uS11 (127 aa).

It belongs to the universal ribosomal protein uS11 family. Part of the 30S ribosomal subunit. Interacts with proteins S7 and S18. Binds to IF-3.

Located on the platform of the 30S subunit, it bridges several disparate RNA helices of the 16S rRNA. Forms part of the Shine-Dalgarno cleft in the 70S ribosome. The sequence is that of Small ribosomal subunit protein uS11 from Chlorobaculum parvum (strain DSM 263 / NCIMB 8327) (Chlorobium vibrioforme subsp. thiosulfatophilum).